The following is a 418-amino-acid chain: Actin-related protein 3-B (418 aa).

This sequence belongs to the actin family. ARP3 subfamily. In terms of assembly, component of the Arp2/3 complex composed of actr2/arp2, actr3/arp3, arpc1 (arpc1a or arpc1b), arpc2, arpc3, arpc4 and arpc5.

The protein resides in the cytoplasm. The protein localises to the cytoskeleton. Its subcellular location is the cell projection. It localises to the nucleus. In terms of biological role, ATP-binding component of the Arp2/3 complex, a multiprotein complex that mediates actin polymerization upon stimulation by nucleation-promoting factor (NPF). The Arp2/3 complex mediates the formation of branched actin networks in the cytoplasm, providing the force for cell motility. Seems to contact the pointed end of the daughter actin filament. In addition to its role in the cytoplasmic cytoskeleton, the Arp2/3 complex also promotes actin polymerization in the nucleus, thereby regulating gene transcription and repair of damaged DNA. The Arp2/3 complex promotes homologous recombination (HR) repair in response to DNA damage by promoting nuclear actin polymerization, leading to drive motility of double-strand breaks (DSBs). The polypeptide is Actin-related protein 3-B (actr3-b) (Xenopus laevis (African clawed frog)).